Reading from the N-terminus, the 202-residue chain is Transcription antitermination protein NusB (202 aa).

The segment covering 1–11 has biased composition (basic and acidic residues); it reads MTEERTADNKA. Disordered regions lie at residues 1–21 and 169–202; these read MTEE…KRHG and SAAK…SDEA.

This sequence belongs to the NusB family.

Involved in transcription antitermination. Required for transcription of ribosomal RNA (rRNA) genes. Binds specifically to the boxA antiterminator sequence of the ribosomal RNA (rrn) operons. The sequence is that of Transcription antitermination protein NusB from Corynebacterium jeikeium (strain K411).